The sequence spans 486 residues: Probable transporter MCH1 (486 aa).

A run of 12 helical transmembrane segments spans residues 31 to 51 (IFAL…FSMY), 68 to 88 (SVSI…GYLG), 95 to 115 (YLAL…SGIF), 135 to 155 (EMAL…YASL), 174 to 194 (TYTP…SSLW), 211 to 231 (VAGI…IIFF), 268 to 288 (FFTD…GGPF), 312 to 333 (FSTH…VGFS), 349 to 369 (VIAL…FTVF), 377 to 397 (VVTI…PTIV), 409 to 429 (IWGS…LLFA), and 457 to 477 (FVIT…IWVF).

It belongs to the major facilitator superfamily.

The protein resides in the vacuole membrane. Functionally, probable transporter. In Yarrowia lipolytica (strain CLIB 122 / E 150) (Yeast), this protein is Probable transporter MCH1 (MCH1).